A 237-amino-acid chain; its full sequence is Lectin alpha chain (237 aa).

Positions 8 and 10 each coordinate Mn(2+). Aspartate 10, tyrosine 12, asparagine 14, and aspartate 19 together coordinate Ca(2+). Tyrosine 12 and asparagine 14 together coordinate a carbohydrate. Positions 19 and 24 each coordinate Mn(2+). 99–100 (LY) lines the a carbohydrate pocket. Residue aspartate 208 participates in Ca(2+) binding. Arginine 228 serves as a coordination point for a carbohydrate.

This sequence belongs to the leguminous lectin family. In terms of assembly, homodimer and homotetramer. Oligomerization is pH-dependent with homotetramers forming at pH 4 and above.

In terms of biological role, D-mannose/D-glucose-binding lectin. Has anti-inflammatory activity in animal models when applied intravenously. Has antinociceptive activity in mice when applied intravenously. This chain is Lectin alpha chain, found in Canavalia boliviana.